A 509-amino-acid polypeptide reads, in one-letter code: Photosystem II CP47 reaction center protein (509 aa).

6 helical membrane passes run 21-36, 101-115, 140-156, 203-218, 237-252, and 457-472; these read AVHL…WAGS, IGLS…IWHW, GIHL…FGAF, IAAG…FHLS, VLSS…AFIV, and SFAL…HGGR.

It belongs to the PsbB/PsbC family. PsbB subfamily. As to quaternary structure, PSII is composed of 1 copy each of membrane proteins PsbA, PsbB, PsbC, PsbD, PsbE, PsbF, PsbH, PsbI, PsbJ, PsbK, PsbL, PsbM, PsbT, PsbX, PsbY, PsbZ, Psb30/Ycf12, at least 3 peripheral proteins of the oxygen-evolving complex and a large number of cofactors. It forms dimeric complexes. Requires Binds multiple chlorophylls. PSII binds additional chlorophylls, carotenoids and specific lipids. as cofactor.

The protein resides in the plastid. It is found in the cyanelle thylakoid membrane. In terms of biological role, one of the components of the core complex of photosystem II (PSII). It binds chlorophyll and helps catalyze the primary light-induced photochemical processes of PSII. PSII is a light-driven water:plastoquinone oxidoreductase, using light energy to abstract electrons from H(2)O, generating O(2) and a proton gradient subsequently used for ATP formation. The chain is Photosystem II CP47 reaction center protein from Cyanophora paradoxa.